Here is a 141-residue protein sequence, read N- to C-terminus: Large ribosomal subunit protein uL11 (141 aa).

This sequence belongs to the universal ribosomal protein uL11 family. In terms of assembly, part of the ribosomal stalk of the 50S ribosomal subunit. Interacts with L10 and the large rRNA to form the base of the stalk. L10 forms an elongated spine to which L12 dimers bind in a sequential fashion forming a multimeric L10(L12)X complex. One or more lysine residues are methylated.

Its function is as follows. Forms part of the ribosomal stalk which helps the ribosome interact with GTP-bound translation factors. This chain is Large ribosomal subunit protein uL11, found in Sulfurimonas denitrificans (strain ATCC 33889 / DSM 1251) (Thiomicrospira denitrificans (strain ATCC 33889 / DSM 1251)).